The sequence spans 405 residues: Neisseria adhesin A (405 aa).

An N-terminal signal peptide occupies residues 1–23 (MKHFPSKVLTTAILATFCSGALA). The tract at residues 24–87 (ATNDDDVKKA…ADDFKGLGLK (64 aa)) is head domain. 2 coiled-coil regions span residues 87–170 (KKVV…KLEA) and 181–329 (AFND…LRKE). Residues 88–350 (KVVTNLTKTV…SGLFQPYNVG (263 aa)) form a coiled stalk domain region. The tract at residues 312–350 (HDTRLNGLDKTVSDLRKETRQGLAEQAALSGLFQPYNVG) is outer membrane translocation of the passenger domain. Beta stranded transmembrane passes span 350-360 (GRFNVTAAVGG), 364-375 (ESAVAIGTGFRF), 382-388 (KAGVAVG), and 394-405 (SAAYHVGVNYEW). Positions 351–405 (RFNVTAAVGGYKSESAVAIGTGFRFTENFAAKAGVAVGTSSGSSAAYHVGVNYEW) are translocator domain.

Belongs to the autotransporter-2 (AT-2) (TC 1.B.40) family. In terms of assembly, the non-membrane anchored protein (residues 24-350) probably forms a homotrimer; it is assumed the mature protein forms trimers in situ. The mature protein without the membrane-targeting segment (residues 24-350) binds to human heat shock 90 beta protein (HSP90AB1) both in vitro and when incubated with human monocytes. A subsequent paper showed binding of the same fragment in epithelial cells to both HSP90AA1 and HSP90AB1; in vitro the interaction is stabilized by ADP and the Hsp90 inhibitor 17-AAG (17-N-allylamino-17-demethoxygeldanamycin), in vitro and in vivo both interactions are inhibited by ATP. Binds human oxidized low-density lipoprotein receptor 1 (LOX-1, OLR1) in protein microarrays, in solution and when LOX-1 is expressed on the cell surface. Binds via the head and the beginning of the coiled stalk (residues 24-170); binding can be abrogated by monoclonal antibodies against those specific regions of NadA. Other potential binding partners were identified but not characterized in the same study. Forms high molecular weight oligomers in whole cell extracts that are not disrupted by boiling in SDS buffer.

The protein localises to the cell outer membrane. It is found in the cell surface. Functionally, adheres to and induces bacterial uptake by human epithelial cells in a microfilament-dependent process. Binding is reduced by pronase treatment, suggesting there is a protein receptor on the human cells. Possible human protein receptors include integrin beta-1 (ITGB1) and oxidized low-density lipoprotein receptor 1 (OLR1). Binds to extracellular human Hsp90 (preferentially the beta isoform, HSP90AB1) on monocytes, binding stimulates monocytes in a TLR4-dependent fashion, polymixin B, which binds NadA, blocks the activation. Hsp90 is probably not the first receptor on human monocytes. Non-membrane anchored protein (residues 24-350) is internalized into human epithelial cells by hijacking the endosome recycling pathway and may be recycled back to the cell surface, which might aid transcellular trafficking of the bacteria. A bacterial cell surface protein; antisera against this protein induce complement-mediated killing of this and other strains. The sequence is that of Neisseria adhesin A from Neisseria meningitidis serogroup B.